The following is a 176-amino-acid chain: NAD(P)H-quinone oxidoreductase subunit J (176 aa).

Polar residues predominate over residues 1–10 (MSETPTSPNQ). The disordered stretch occupies residues 1-22 (MSETPTSPNQDLPEAPQAGPLS).

Belongs to the complex I 30 kDa subunit family. In terms of assembly, NDH-1 can be composed of about 15 different subunits; different subcomplexes with different compositions have been identified which probably have different functions.

The protein resides in the cellular thylakoid membrane. The enzyme catalyses a plastoquinone + NADH + (n+1) H(+)(in) = a plastoquinol + NAD(+) + n H(+)(out). It carries out the reaction a plastoquinone + NADPH + (n+1) H(+)(in) = a plastoquinol + NADP(+) + n H(+)(out). NDH-1 shuttles electrons from an unknown electron donor, via FMN and iron-sulfur (Fe-S) centers, to quinones in the respiratory and/or the photosynthetic chain. The immediate electron acceptor for the enzyme in this species is believed to be plastoquinone. Couples the redox reaction to proton translocation, and thus conserves the redox energy in a proton gradient. Cyanobacterial NDH-1 also plays a role in inorganic carbon-concentration. This chain is NAD(P)H-quinone oxidoreductase subunit J, found in Synechococcus sp. (strain RCC307).